The sequence spans 39 residues: Phosphatase RapI inhibitor (39 aa).

The propeptide occupies 1–34 (MKISRILLAAVILSSVFSITYLQSDHNTEIKVAA).

The protein belongs to the Phr family. In terms of processing, contains a predicted signal peptide cleavage site in the N-terminal region, however the propeptide is probably subject to only one processing event, at the N-terminal end of the mature peptide.

The protein localises to the secreted. The protein resides in the cytoplasm. Intercellular signaling molecule that inhibits excision of the mobile genetic element ICEBs1 when cells are crowded by cells that contain ICEBs1 and produce the PhrI peptide. Secreted during production, but the mature peptide acts intracellularly, indicating that it needs to be imported into the cell to function. Acts by inhibiting RapI activity. In Bacillus subtilis (strain 168), this protein is Phosphatase RapI inhibitor (phrI).